Here is a 648-residue protein sequence, read N- to C-terminus: Dystrotelin (648 aa).

Residues 223 to 279 (QHRVHCHACKAFPITGLRYRCLKCLNVHLCQSCFLTERRSRKHKPSHSVLEYCTQPS) form a ZZ-type zinc finger. 8 residues coordinate Zn(2+): cysteine 228, cysteine 231, cysteine 243, cysteine 246, cysteine 252, cysteine 255, histidine 265, and histidine 269. Residues 367–446 (QRETAELQKD…LDTVRHLLSL (80 aa)) are a coiled coil. The span at 455-474 (SHSNLQLEQDGSINENNWTQ) shows a compositional bias: polar residues. Disordered stretches follow at residues 455-509 (SHSN…DTLY) and 536-557 (QREE…EGLP). A compositionally biased stretch (basic and acidic residues) spans 479-502 (KPHESSSTEHEVEERGTRQERRFE). Positions 538 to 548 (EEEELQEEEEG) are enriched in acidic residues.

The protein localises to the cell membrane. The sequence is that of Dystrotelin (dytn) from Danio rerio (Zebrafish).